Here is a 117-residue protein sequence, read N- to C-terminus: Putative pterin-4-alpha-carbinolamine dehydratase (117 aa).

Belongs to the pterin-4-alpha-carbinolamine dehydratase family.

The catalysed reaction is (4aS,6R)-4a-hydroxy-L-erythro-5,6,7,8-tetrahydrobiopterin = (6R)-L-erythro-6,7-dihydrobiopterin + H2O. This is Putative pterin-4-alpha-carbinolamine dehydratase from Azoarcus sp. (strain BH72).